We begin with the raw amino-acid sequence, 372 residues long: Probable arabinan endo-1,5-alpha-L-arabinosidase B (372 aa).

Residues 1–16 (MTVLVALFCLVTWTLC) form the signal peptide. Positions 23 to 34 (STQGTQQPQQPE) are enriched in low complexity. A disordered region spans residues 23–52 (STQGTQQPQQPEKTPHPHPQPEDAFPPTHA). Asp-59 (proton acceptor) is an active-site residue. The N-linked (GlcNAc...) asparagine glycan is linked to Asn-120. The active-site Proton donor is the Glu-252. N-linked (GlcNAc...) asparagine glycosylation is present at Asn-363.

This sequence belongs to the glycosyl hydrolase 43 family.

The protein resides in the secreted. It catalyses the reaction Endohydrolysis of (1-&gt;5)-alpha-arabinofuranosidic linkages in (1-&gt;5)-arabinans.. It participates in glycan metabolism; L-arabinan degradation. In terms of biological role, endo-1,5-alpha-L-arabinanase involved in degradation of pectin. Its preferred substrate is linear 1,5-alpha-L-arabinan. The polypeptide is Probable arabinan endo-1,5-alpha-L-arabinosidase B (abnB) (Aspergillus fumigatus (strain CBS 144.89 / FGSC A1163 / CEA10) (Neosartorya fumigata)).